The sequence spans 246 residues: Uridylate kinase (246 aa).

ATP is bound at residue 18–21; the sequence is KVSG. Position 60 (glycine 60) interacts with UMP. ATP contacts are provided by glycine 61 and arginine 65. UMP-binding positions include aspartate 80 and 141 to 148; that span reads TGNPFFTT. 4 residues coordinate ATP: threonine 168, glutamine 169, tyrosine 174, and aspartate 177.

It belongs to the UMP kinase family. In terms of assembly, homohexamer.

It localises to the cytoplasm. It catalyses the reaction UMP + ATP = UDP + ADP. It functions in the pathway pyrimidine metabolism; CTP biosynthesis via de novo pathway; UDP from UMP (UMPK route): step 1/1. Its activity is regulated as follows. Inhibited by UTP. Catalyzes the reversible phosphorylation of UMP to UDP. The polypeptide is Uridylate kinase (Gluconobacter oxydans (strain 621H) (Gluconobacter suboxydans)).